The sequence spans 334 residues: Glucokinase-like protein PD_0680 (334 aa).

18–23 lines the ATP pocket; the sequence is ADVGGT.

This sequence belongs to the bacterial glucokinase family.

The chain is Glucokinase-like protein PD_0680 from Xylella fastidiosa (strain Temecula1 / ATCC 700964).